We begin with the raw amino-acid sequence, 601 residues long: MCGIVGYIGYDNAKELLLKGLEKLEYRGYDSAGIAVVNDDGTKLFKEKGRIAELRKVADNSDEDGTLGIGHTRWATHGVPNYENSHPHQSTSGRFTLVHNGVIENYEELKAEYLSDVTFSSETDTEVIVQLVDYFSRQGLATEDAFTKVVKLLHGSYALGLLDDNDKDTIYVAKNKSPLLVGVGEGFNVIASDALAMLQTTNQYKEIHDHEIVIVKRDTVEIKDLEGHIQQRDTYTAEIDAADAEKGVYDHYMLKEIHEQPAVMRRIIQEYQDEKGNLKIDSEIINDVADADRIYIVAAGTSYHAGLVGKEFIEKWAGVPTEVHVASEFVYNMPLLSEKPLFIYISQSGETADSRAVLVETNKLGHKSLTITNVAGSTLSREADHTLLLHAGPEIAVASTKAYTAQIAVLSILSQIVAKNHGRETDVDLLRELAKVTTAIETIVDDAPKMEQIATDFLKTTRNAFFIGRTIDYNVSLEGALKLKEISYIQAEGFAGGELKHGTIALIEDGTPVIGLATQENVNLSIRGNMKEVVARGAYPCMISMEGLNKEGDTYVIPQVHELLTPLVSVVTMQLISYYAALQRDLDVDKPRNLAKSVTVE.

Cys-2 acts as the Nucleophile; for GATase activity in catalysis. Residues 2 to 218 (CGIVGYIGYD…DHEIVIVKRD (217 aa)) enclose the Glutamine amidotransferase type-2 domain. 2 SIS domains span residues 284–423 (IIND…NHGR) and 453–591 (IATD…VDKP). The active-site For Fru-6P isomerization activity is the Lys-596.

Homodimer.

Its subcellular location is the cytoplasm. It carries out the reaction D-fructose 6-phosphate + L-glutamine = D-glucosamine 6-phosphate + L-glutamate. Its function is as follows. Catalyzes the first step in hexosamine metabolism, converting fructose-6P into glucosamine-6P using glutamine as a nitrogen source. The chain is Glutamine--fructose-6-phosphate aminotransferase [isomerizing] from Staphylococcus epidermidis (strain ATCC 35984 / DSM 28319 / BCRC 17069 / CCUG 31568 / BM 3577 / RP62A).